We begin with the raw amino-acid sequence, 55 residues long: Large ribosomal subunit protein bL33 (55 aa).

It belongs to the bacterial ribosomal protein bL33 family.

In Rhodopseudomonas palustris (strain BisB5), this protein is Large ribosomal subunit protein bL33.